The sequence spans 474 residues: MKDIVFYNSLTREKEVFKPINANEVGMYSCGPTVYNYAHIGNFRAYIFSDLLRRVLEDYGYNVKLVMNLTDVDDKTIKNSKENHISLNDYTKKYKEAFFEDIKTLGIKKATVNPAATDHIKEMINIIELLKKNGHTYESDGSVYFKISTFPQYGELANLDKQELLDGASGRVLNDEYDKENASDFVLWKAYTEDDGDVYWDSPFGKGRPGWHIECSAMSCKYLGKHFDIHTGGVDNKFPHHENEIAQNEAAFNEKFVNYWLHCEHLIVDGEKMSKSKGNFYTLRDLLDKGLSPEAIRYSLINSHYRKQLNFTIEGIKQSQSAIDRVNDLIFRLKDINNTESNEINENLLKELEVSNEKFSDSIYNDLNISEALGILFTLVKTVNTSFDSINVNTRDAILKFIERVNNIINCFNMGDTDKKSNNEDEDKINKLIEERTIAKKEKNYQKADEIRNQLLSMGIEIMDTPQGVKWKRK.

A Zn(2+)-binding site is contributed by C30. A 'HIGH' region motif is present at residues 32-42 (PTVYNYAHIGN). Zn(2+)-binding residues include C215, H240, and E244. Positions 272-276 (KMSKS) match the 'KMSKS' region motif. K275 lines the ATP pocket.

It belongs to the class-I aminoacyl-tRNA synthetase family. Monomer. Requires Zn(2+) as cofactor.

It is found in the cytoplasm. The enzyme catalyses tRNA(Cys) + L-cysteine + ATP = L-cysteinyl-tRNA(Cys) + AMP + diphosphate. This is Cysteine--tRNA ligase from Brachyspira hyodysenteriae (strain ATCC 49526 / WA1).